Here is a 568-residue protein sequence, read N- to C-terminus: 2-succinyl-5-enolpyruvyl-6-hydroxy-3-cyclohexene-1-carboxylate synthase (568 aa).

It belongs to the TPP enzyme family. MenD subfamily. Homodimer. It depends on Mg(2+) as a cofactor. Mn(2+) is required as a cofactor. Requires thiamine diphosphate as cofactor.

It catalyses the reaction isochorismate + 2-oxoglutarate + H(+) = 5-enolpyruvoyl-6-hydroxy-2-succinyl-cyclohex-3-ene-1-carboxylate + CO2. Its pathway is quinol/quinone metabolism; 1,4-dihydroxy-2-naphthoate biosynthesis; 1,4-dihydroxy-2-naphthoate from chorismate: step 2/7. It functions in the pathway quinol/quinone metabolism; menaquinone biosynthesis. Functionally, catalyzes the thiamine diphosphate-dependent decarboxylation of 2-oxoglutarate and the subsequent addition of the resulting succinic semialdehyde-thiamine pyrophosphate anion to isochorismate to yield 2-succinyl-5-enolpyruvyl-6-hydroxy-3-cyclohexene-1-carboxylate (SEPHCHC). This chain is 2-succinyl-5-enolpyruvyl-6-hydroxy-3-cyclohexene-1-carboxylate synthase, found in Pasteurella multocida (strain Pm70).